The following is a 215-amino-acid chain: CASP-like protein UU3 (215 aa).

Residues 1–44 lie on the Cytoplasmic side of the membrane; the sequence is MATAWESEYFDKVTPGERERAVPPMVPQQTPPPVYIQPQVSRNG. Residues 45–65 traverse the membrane as a helical segment; that stretch reads IVASIVLRLLTLIFAVVALAV. The Extracellular portion of the chain corresponds to 66-93; sequence LASNTGSFQVSTGSATSVKTIKFTILSA. A helical transmembrane segment spans residues 94–114; that stretch reads FTYLFAVCGVVAVYSLLLIIV. The Cytoplasmic portion of the chain corresponds to 115–128; it reads EMIDLAVRGFTTHT. A helical membrane pass occupies residues 129 to 149; it reads LVAIFVFVLDQTMAYVLISAA. Topologically, residues 150–185 are extracellular; sequence SASANGVKVSRDESNITGYKFDISCSNLGIDDYCTK. N164 carries an N-linked (GlcNAc...) asparagine glycan. A helical membrane pass occupies residues 186–206; the sequence is ASASVAIAFIAFLFMAITAGV. Topologically, residues 207–215 are cytoplasmic; it reads SARRLFKLP.

Belongs to the Casparian strip membrane proteins (CASP) family. In terms of assembly, homodimer and heterodimers.

The protein localises to the cell membrane. The sequence is that of CASP-like protein UU3 from Physcomitrium patens (Spreading-leaved earth moss).